Reading from the N-terminus, the 252-residue chain is Probable transcriptional regulatory protein THA_1246 (252 aa).

This sequence belongs to the TACO1 family.

It is found in the cytoplasm. The protein is Probable transcriptional regulatory protein THA_1246 of Thermosipho africanus (strain TCF52B).